The following is a 466-amino-acid chain: Fumarate hydratase class II (466 aa).

Substrate-binding positions include 100–102, Arg128, 131–134, 141–143, and Thr189; these read SGT, HPND, and STN. The Proton donor/acceptor role is filled by His190. Ser320 is an active-site residue. Residues Ser321 and 326-328 each bind substrate; that span reads KVN.

This sequence belongs to the class-II fumarase/aspartase family. Fumarase subfamily. As to quaternary structure, homotetramer.

The protein localises to the cytoplasm. The catalysed reaction is (S)-malate = fumarate + H2O. It functions in the pathway carbohydrate metabolism; tricarboxylic acid cycle; (S)-malate from fumarate: step 1/1. Functionally, involved in the TCA cycle. Catalyzes the stereospecific interconversion of fumarate to L-malate. The sequence is that of Fumarate hydratase class II from Prochlorococcus marinus (strain MIT 9313).